We begin with the raw amino-acid sequence, 450 residues long: MGETMSKRLKFHLGEAEMEERSFPNPFPDYEAAASAAGLAAGSAEETGRVCPLPTTEDPGLPFHPNGKIVPNFIKRIQTKIKDLLQQMEEGLKTADPHDCSAYTGWTGIALLYLQLYRVTGDQTYLLRSLDYVKRTLRNLSGRRVTFLCGDAGPLAVGAVIYHKLKSECESQECITKLLQMHRTIVCQESELPDELLYGRAGYLYALLYLNTEIGPGTVGETAIKEVVSAIIESGKSLSREERKSERCPLLYQWHRKQYVGAAHGMAGIYYMLMQPEAKVDQETLTEMVKPSIDYVRHKKFRSGNYPSSLSNETDRLVHWCHGAPGVIHVLLQAYQVFKEEKYLKEAMECSDVIWQRGLLRKGYGICHGTSGNGYSFLSLYRLTQDKKYLYRACKFAEWCLDYGAHGCRIPDRPYSLFEGMAGAVHFLSDILVPETARFPAFELGFLQKD.

Residue Gly2 is the site of N-myristoyl glycine attachment. The interval 2–14 (GETMSKRLKFHLG) is interaction with inositol phospholipids. Phosphotyrosine is present on Tyr198.

Belongs to the LanC-like protein family. In terms of assembly, interacts with an array of inositol phospholipids such as phosphatidylinositol 3-phosphate (PI3P), phosphatidylinositol 4-phosphate (PI4P) and phosphatidylinositol 5-phosphate (PI5P). PIP-binding enhances membrane association. Post-translationally, myristoylated. Essential for membrane association.

The protein resides in the nucleus. The protein localises to the cytoplasm. It localises to the cell membrane. In terms of biological role, necessary for abscisic acid (ABA) binding on the cell membrane and activation of the ABA signaling pathway in granulocytes. This is LanC-like protein 2 (Lancl2) from Mus musculus (Mouse).